We begin with the raw amino-acid sequence, 288 residues long: Syntaxin-1A (288 aa).

A compositionally biased stretch (basic and acidic residues) spans 1-13; it reads MKDRTQELRTAKD. Residues 1–20 are disordered; it reads MKDRTQELRTAKDSDDDDDV. Residues 1-265 are Cytoplasmic-facing; that stretch reads MKDRTQELRT…KYQSKARRKK (265 aa). S14, S64, and S95 each carry phosphoserine. Residues 68–109 adopt a coiled-coil conformation; it reads DEKTKEELEELMSDIKKTANKVRSKLKSIEQSIEQEEGLNRS. Phosphoserine; by DAPK1 is present on S188. Positions 192-254 constitute a t-SNARE coiled-coil homology domain; the sequence is LSEIETRHSE…ERAVSDTKKA (63 aa). Residues K252, K253, and K256 each participate in a glycyl lysine isopeptide (Lys-Gly) (interchain with G-Cter in SUMO) cross-link. Residues 266-286 form a helical; Anchor for type IV membrane protein membrane-spanning segment; it reads IMIIICCVILGIIIASTIGGI. Residues 287-288 are Extracellular-facing; the sequence is FG.

It belongs to the syntaxin family. In terms of assembly, part of the SNARE core complex containing SNAP25, VAMP2 and STX1A; this complex constitutes the basic catalytic machinery of the complex neurotransmitter release apparatus. The SNARE complex interacts with CPLX1. Interacts with STXBP1. The interaction with STXBP1 promotes assembly of the SNARE complex. Interacts (via C-terminus) with KCNB1 (via C-terminus); the interaction increases in a calcium-dependent manner and induces a pore-independent enhancement of exocytosis in neuroendocrine cells, chromaffin cells, pancreatic beta cells and from the soma of dorsal root ganglia (DRG) neurons. Interacts with SYTL4. Interacts with STXBP6. Interacts with PLCL1 (via C2 domain). Interacts with OTOF. Interacts with LGI3. Interacts (via the H3 domain) with SLC6A4 (via the N-terminus); this interaction regulates SLC4A6 channel conductance in thalamocortical neurons. Interacts with SYT6 and SYT8; the interaction is Ca(2+)-dependent. Interacts with VAMP8. Interacts with SNAP23. Interacts with VAPA and SYBU. Interacts with PRRT2. Interacts with SEPT8. Interacts with STXBP5L. Interacts with synaptotagmin-1/SYT1. Interacts with SEPTIN5; in the cerebellar cortex. Interacts with SEPTIN4; in the striatum. Phosphorylated by CK2. Phosphorylation at Ser-188 by DAPK1 significantly decreases its interaction with STXBP1. Post-translationally, phosphorylated by CK2. Phosphorylation at Ser-188 by DAPK1 significantly decreases its interaction with STXBP1. In terms of processing, sumoylated, sumoylation is required for regulation of synaptic vesicle endocytosis. In terms of tissue distribution, expressed in the striatum (at protein level). Expressed in the ileum.

Its subcellular location is the cytoplasmic vesicle. The protein localises to the secretory vesicle. It is found in the synaptic vesicle membrane. It localises to the synapse. The protein resides in the synaptosome. Its subcellular location is the cell membrane. In terms of biological role, plays an essential role in hormone and neurotransmitter calcium-dependent exocytosis and endocytosis. Part of the SNARE (Soluble NSF Attachment Receptor) complex composed of SNAP25, STX1A and VAMP2 which mediates the fusion of synaptic vesicles with the presynaptic plasma membrane. STX1A and SNAP25 are localized on the plasma membrane while VAMP2 resides in synaptic vesicles. The pairing of the three SNAREs from the N-terminal SNARE motifs to the C-terminal anchors leads to the formation of the SNARE complex, which brings membranes into close proximity and results in final fusion. Participates in the calcium-dependent regulation of acrosomal exocytosis in sperm. Also plays an important role in the exocytosis of hormones such as insulin or glucagon-like peptide 1 (GLP-1). The polypeptide is Syntaxin-1A (Stx1a) (Mus musculus (Mouse)).